The following is an 849-amino-acid chain: Disks large homolog 3 (849 aa).

The segment at 32-101 (DWQVPDPYGP…GKSTPKLNGS (70 aa)) is disordered. Over residues 41–53 (PSGGNGASSGYGG) the composition is skewed to gly residues. The segment covering 57–69 (QTLPSQAGATPTP) has biased composition (polar residues). 3 PDZ domains span residues 149-235 (EIVL…VRRR), 244-330 (EVNL…VAKP), and 404-484 (KIIL…AQYR). At S157 the chain carries Phosphoserine. The region spanning 519–589 (KRSLYVRALF…PSKKRVEKKE (71 aa)) is the SH3 domain. In terms of domain architecture, Guanylate kinase-like spans 659–834 (ARPVIILGPM…IYNKIKQIIE (176 aa)). Position 705 is a phosphotyrosine (Y705).

This sequence belongs to the MAGUK family. In terms of assembly, interacts through its PDZ domains with NETO1, GRIN2B, SYNGAP1 and APC. Interacts through its first two PDZ domains with ERBB4. Interacts through its third PDZ domain with NLGN1, and probably with NLGN2 and NLGN3. Interacts through its guanylate kinase-like domain with DLGAP1, DLGAP2, DLGAP3 and DLGAP4. Interacts with FRMPD4 (via C-terminus). Interacts with LRFN1, LRFN2 and LRFN4. Interacts with FLTP. Interacts with GPR85. Interacts with DGKI (via PDZ-binding motif).

Its function is as follows. Required for learning most likely through its role in synaptic plasticity following NMDA receptor signaling. The protein is Disks large homolog 3 (Dlg3) of Mus musculus (Mouse).